Consider the following 134-residue polypeptide: Small ribosomal subunit protein uS8c (134 aa).

It belongs to the universal ribosomal protein uS8 family. In terms of assembly, part of the 30S ribosomal subunit.

The protein resides in the plastid. It is found in the chloroplast. One of the primary rRNA binding proteins, it binds directly to 16S rRNA central domain where it helps coordinate assembly of the platform of the 30S subunit. This Gossypium barbadense (Sea Island cotton) protein is Small ribosomal subunit protein uS8c (rps8).